A 475-amino-acid polypeptide reads, in one-letter code: F-box/kelch-repeat protein At1g22040 (475 aa).

The segment at 1-28 is disordered; it reads MGSVMSLSCSKRKATSQDVECSSESRKR. Residues 41-87 enclose the F-box domain; the sequence is CRLIPSLPDELSIQILARLPRICYSSVRLVSRRWRSAVSTSEVYSLR. Kelch repeat units lie at residues 94-140, 182-228, 229-279, 306-350, and 352-401; these read EEWL…KSLS, GLYV…VLNK, KLYV…AFLA, PFFV…VDGE, and YAFD…GFHG.

The sequence is that of F-box/kelch-repeat protein At1g22040 from Arabidopsis thaliana (Mouse-ear cress).